A 175-amino-acid polypeptide reads, in one-letter code: ADP-ribosylation factor 6 (175 aa).

Gly2 is lipidated: N-myristoyl glycine. The N6-myristoyl lysine moiety is linked to residue Lys3. GTP contacts are provided by residues 23 to 28 (AAGKTT), 41 to 44 (TIPT), 63 to 67 (DVGGQ), 122 to 125 (NKQD), and 155 to 156 (CA).

This sequence belongs to the small GTPase superfamily. Arf family.

It localises to the cytoplasm. The protein resides in the cytosol. It is found in the cell membrane. The protein localises to the endosome membrane. Its subcellular location is the recycling endosome membrane. It localises to the cell projection. The protein resides in the filopodium membrane. It is found in the ruffle. The protein localises to the cleavage furrow. Its subcellular location is the midbody. It localises to the midbody ring. The enzyme catalyses GTP + H2O = GDP + phosphate + H(+). Functionally, GTP-binding protein involved in protein trafficking; regulates endocytic recycling and cytoskeleton remodeling. May modulate vesicle budding and uncoating within the Golgi apparatus. May contribute to the regulation of dendritic branching, filopodia extension and dendritic spine development. The chain is ADP-ribosylation factor 6 (ARF6) from Gallus gallus (Chicken).